The primary structure comprises 792 residues: Endonuclease MutS2 (792 aa).

334-341 lines the ATP pocket; it reads GPNTGGKT. Residues 717–792 form the Smr domain; the sequence is INLIGKTTDE…DAGVTIATFK (76 aa).

This sequence belongs to the DNA mismatch repair MutS family. MutS2 subfamily. As to quaternary structure, homodimer. Binds to stalled ribosomes, contacting rRNA.

In terms of biological role, endonuclease that is involved in the suppression of homologous recombination and thus may have a key role in the control of bacterial genetic diversity. Acts as a ribosome collision sensor, splitting the ribosome into its 2 subunits. Detects stalled/collided 70S ribosomes which it binds and splits by an ATP-hydrolysis driven conformational change. Acts upstream of the ribosome quality control system (RQC), a ribosome-associated complex that mediates the extraction of incompletely synthesized nascent chains from stalled ribosomes and their subsequent degradation. Probably generates substrates for RQC. The protein is Endonuclease MutS2 of Agathobacter rectalis (strain ATCC 33656 / DSM 3377 / JCM 17463 / KCTC 5835 / VPI 0990) (Eubacterium rectale).